Here is a 495-residue protein sequence, read N- to C-terminus: Ectonucleoside triphosphate diphosphohydrolase 8 (495 aa).

The Cytoplasmic portion of the chain corresponds to 1–8 (MGLSRKEQ). Residues 9-29 (VFLALLGASGVSGLTALILLL) traverse the membrane as a helical segment. Topologically, residues 30-471 (VEATSVLLPT…AESYGVWVAK (442 aa)) are extracellular. A glycan (N-linked (GlcNAc...) asparagine) is linked at Asn-67. An intrachain disulfide couples Cys-78 to Cys-102. Catalysis depends on Glu-168, which acts as the Proton acceptor. A disulfide bond links Cys-246 and Cys-292. Asn-304 is a glycosylation site (N-linked (GlcNAc...) asparagine). Cysteines 329 and 335 form a disulfide. An N-linked (GlcNAc...) asparagine glycan is attached at Asn-363. Cys-381 and Cys-403 are oxidised to a cystine. Residues 472–492 (VVFMVLALVAVVGAALVQLFW) form a helical membrane-spanning segment. Over 493 to 495 (LQD) the chain is Cytoplasmic.

The protein belongs to the GDA1/CD39 NTPase family. Ca(2+) serves as cofactor. The cofactor is Mg(2+). Post-translationally, N-glycosylated.

It is found in the cell membrane. The enzyme catalyses a ribonucleoside 5'-triphosphate + 2 H2O = a ribonucleoside 5'-phosphate + 2 phosphate + 2 H(+). Not inhibited by ARL 67156. Canalicular ectonucleoside NTPDase responsible for the main hepatic NTPDase activity. Ectonucleoside NTPDases catalyze the hydrolysis of gamma- and beta-phosphate residues of nucleotides, playing a central role in concentration of extracellular nucleotides. Has activity toward ATP, ADP, UTP and UDP, but not toward AMP. In Homo sapiens (Human), this protein is Ectonucleoside triphosphate diphosphohydrolase 8 (ENTPD8).